A 245-amino-acid polypeptide reads, in one-letter code: MLILLPPSETKTPGGAGAPLDLPSLSFPELTDVRESIITDLGALSPDDALPVLGISEKLRPEAVANTVLRSAPTMPAVLRYSGVLYDALAADTLTPAALNRLAIGSALFGVVRAGDHIPHYRLSGGTKLPGAQGTTPTMKARWGTTITDALAGVDELIIDLRSGTYQQLGKVPGAVTVRVESVLGDGTRKVVSHFNKHYKGELARVLATSPREATTAGEVADIARGAGMTVEINEGRKETLTLVV.

Residues 1–20 are disordered; it reads MLILLPPSETKTPGGAGAPL.

Belongs to the UPF0246 family.

The chain is UPF0246 protein CE1889 from Corynebacterium efficiens (strain DSM 44549 / YS-314 / AJ 12310 / JCM 11189 / NBRC 100395).